Reading from the N-terminus, the 102-residue chain is Glutaredoxin 1 (102 aa).

The region spanning 1 to 96 (MNKAILHTII…KLLEGQPKKK (96 aa)) is the Glutaredoxin domain. Cys-17 and Cys-20 form a disulfide bridge.

It belongs to the glutaredoxin family. Monomer.

The protein resides in the cytoplasm. Has a glutathione-disulfide oxidoreductase activity in the presence of NADPH and glutathione reductase. Reduces low molecular weight disulfides and proteins. This is Glutaredoxin 1 (grxC1) from Rickettsia felis (strain ATCC VR-1525 / URRWXCal2) (Rickettsia azadi).